Consider the following 420-residue polypeptide: 3-oxo-tetronate kinase (420 aa).

ATP is bound by residues serine 258, 360–363, and glycine 403; that span reads GGET.

This sequence belongs to the four-carbon acid sugar kinase family.

The catalysed reaction is 3-dehydro-L-erythronate + ATP = 3-dehydro-4-O-phospho-L-erythronate + ADP + H(+). It catalyses the reaction 3-dehydro-D-erythronate + ATP = 3-dehydro-4-O-phospho-D-erythronate + ADP + H(+). Functionally, catalyzes the ATP-dependent phosphorylation of 3-oxo-tetronate to 3-oxo-tetronate 4-phosphate. This is 3-oxo-tetronate kinase from Salmonella typhimurium (strain LT2 / SGSC1412 / ATCC 700720).